The primary structure comprises 161 residues: Small ribosomal subunit protein uS9 (161 aa).

2 disordered regions span residues Met-1–Ala-27 and Lys-142–Arg-161.

This sequence belongs to the universal ribosomal protein uS9 family.

This chain is Small ribosomal subunit protein uS9, found in Clavibacter michiganensis subsp. michiganensis (strain NCPPB 382).